A 141-amino-acid chain; its full sequence is Hemoglobin subunit alpha-D/D' (141 aa).

Positions 1–141 (MLTADDKKLI…VAAVLAEKYR (141 aa)) constitute a Globin domain. His-58 and His-87 together coordinate heme b.

The protein belongs to the globin family. Heterotetramer of two alpha-D chains and two beta chains. In terms of tissue distribution, red blood cells.

Functionally, involved in oxygen transport from the lung to the various peripheral tissues. The chain is Hemoglobin subunit alpha-D/D' (HBAD) from Gyps rueppelli (Rueppell's griffon).